We begin with the raw amino-acid sequence, 347 residues long: Protein RecA (347 aa).

ATP is bound at residue 68–75 (GPESSGKT).

The protein belongs to the RecA family.

The protein resides in the cytoplasm. In terms of biological role, can catalyze the hydrolysis of ATP in the presence of single-stranded DNA, the ATP-dependent uptake of single-stranded DNA by duplex DNA, and the ATP-dependent hybridization of homologous single-stranded DNAs. It interacts with LexA causing its activation and leading to its autocatalytic cleavage. The sequence is that of Protein RecA from Mycobacterium sp. (strain JLS).